The sequence spans 283 residues: Shikimate dehydrogenase (NADP(+)) (283 aa).

Shikimate-binding positions include S18 to S20 and T66. K70 acts as the Proton acceptor in catalysis. The shikimate site is built by N91 and D106. Residues G130–A134 and M225 contribute to the NADP(+) site. Y227 lines the shikimate pocket. G248 lines the NADP(+) pocket.

Belongs to the shikimate dehydrogenase family. Homodimer.

The catalysed reaction is shikimate + NADP(+) = 3-dehydroshikimate + NADPH + H(+). It functions in the pathway metabolic intermediate biosynthesis; chorismate biosynthesis; chorismate from D-erythrose 4-phosphate and phosphoenolpyruvate: step 4/7. Functionally, involved in the biosynthesis of the chorismate, which leads to the biosynthesis of aromatic amino acids. Catalyzes the reversible NADPH linked reduction of 3-dehydroshikimate (DHSA) to yield shikimate (SA). This Pelodictyon phaeoclathratiforme (strain DSM 5477 / BU-1) protein is Shikimate dehydrogenase (NADP(+)).